Consider the following 258-residue polypeptide: Ribosomal RNA small subunit methyltransferase A (258 aa).

S-adenosyl-L-methionine is bound by residues histidine 13, leucine 15, glycine 40, glutamate 61, aspartate 86, and asparagine 106.

This sequence belongs to the class I-like SAM-binding methyltransferase superfamily. rRNA adenine N(6)-methyltransferase family. RsmA subfamily.

It localises to the cytoplasm. It carries out the reaction adenosine(1518)/adenosine(1519) in 16S rRNA + 4 S-adenosyl-L-methionine = N(6)-dimethyladenosine(1518)/N(6)-dimethyladenosine(1519) in 16S rRNA + 4 S-adenosyl-L-homocysteine + 4 H(+). Its function is as follows. Specifically dimethylates two adjacent adenosines (A1518 and A1519) in the loop of a conserved hairpin near the 3'-end of 16S rRNA in the 30S particle. May play a critical role in biogenesis of 30S subunits. In Coxiella burnetii (strain Dugway 5J108-111), this protein is Ribosomal RNA small subunit methyltransferase A.